The sequence spans 252 residues: Phosphomannomutase (252 aa).

Catalysis depends on Asp-13, which acts as the Nucleophile. Mg(2+) contacts are provided by Asp-13 and Asp-15. Asp-15 serves as the catalytic Proton donor/acceptor. Arg-22, Arg-124, Arg-135, Arg-142, Ser-180, and Asp-182 together coordinate alpha-D-mannose 1-phosphate. Positions 208, 220, and 225 each coordinate Mg(2+).

It belongs to the eukaryotic PMM family. Homodimer. It depends on Mg(2+) as a cofactor. Expressed in roots, leaves, stems and flowers.

It is found in the cytoplasm. It catalyses the reaction alpha-D-mannose 1-phosphate = D-mannose 6-phosphate. Its pathway is nucleotide-sugar biosynthesis; GDP-alpha-D-mannose biosynthesis; alpha-D-mannose 1-phosphate from D-fructose 6-phosphate: step 2/2. Functionally, catalyzes the interconversion of mannose-6-phosphate to mannose-1-phosphate, the precursor for the synthesis of GDP-mannose. GDP-mannose is an essential sugar nucleotide for the synthesis of D-mannose-containing cell wall polysaccharides (galactomannans and glucomannans), glycolipids, glycoproteins and the antioxidant L-ascorbate. Involved in the biosynthesis of ascorbate and polysaccharides in response to abiotic stress during seed germination. This Dendrobium officinale (Orchid) protein is Phosphomannomutase.